The chain runs to 568 residues: AP2-like ethylene-responsive transcription factor PLT2 (568 aa).

Positions 151–171 (ASPAETSADNSSSTTNTSGGA) are enriched in low complexity. A disordered region spans residues 151–173 (ASPAETSADNSSSTTNTSGGAIV). 2 consecutive DNA-binding regions (AP2/ERF) follow at residues 190–256 (IYRG…TNFP) and 292–350 (MYRG…TNFE). Residues 548–568 (WNSGESAQGSNPGGVFTMWNE) form a disordered region.

Belongs to the AP2/ERF transcription factor family. AP2 subfamily. Post-translationally, stabilized in root meristems by reactive oxygen species (ROS) mediated oxidative post-translational modification triggered by RGF1 hormone peptide in a RITF1-dependent manner. Expressed in roots, seedlings, flowers, and siliques. Also detected at low levels in leaves. In roots, specifically detected in the distal root meristem, including the QC. This tissue specificity is regulated by auxin gradient and depends on PIN proteins.

Its subcellular location is the nucleus. In terms of biological role, probably acts as a transcriptional activator. Binds to the GCC-box pathogenesis-related promoter element. May be involved in the regulation of gene expression by stress factors and by components of stress signal transduction pathways. Master regulator of basal/root fate. Essential for root quiescent center (QC) and columella specification, stem cell activity, as well as for establishment of the stem cell niche during embryogenesis. Modulates the root polar auxin transport by regulating the distribution of PIN genes. Essential role in respecifying pattern and polarity in damaged roots. Direct target of the transcriptional corepressor TPL. Expression levels and patterns regulated post-transcriptionally by root meristem growth factors (RGFs). The sequence is that of AP2-like ethylene-responsive transcription factor PLT2 from Arabidopsis thaliana (Mouse-ear cress).